Here is a 79-residue protein sequence, read N- to C-terminus: Acyl carrier protein (79 aa).

The region spanning 2-77 (SDTAERVKKI…DAIDFINQKT (76 aa)) is the Carrier domain. Ser37 is subject to O-(pantetheine 4'-phosphoryl)serine.

This sequence belongs to the acyl carrier protein (ACP) family. Post-translationally, 4'-phosphopantetheine is transferred from CoA to a specific serine of apo-ACP by AcpS. This modification is essential for activity because fatty acids are bound in thioester linkage to the sulfhydryl of the prosthetic group.

The protein localises to the cytoplasm. Its pathway is lipid metabolism; fatty acid biosynthesis. In terms of biological role, carrier of the growing fatty acid chain in fatty acid biosynthesis. The chain is Acyl carrier protein from Rhodospirillum centenum (strain ATCC 51521 / SW).